Consider the following 519-residue polypeptide: NADH-ubiquinone oxidoreductase chain 4 (519 aa).

The next 14 membrane-spanning stretches (helical) occupy residues 2 to 22 (SGLL…ILSF), 68 to 88 (IAFI…ILFD), 112 to 132 (VDGL…IALI), 146 to 166 (LIII…LDVL), 167 to 187 (LFYI…GLFG), 196 to 216 (FYIF…ILTM), 239 to 259 (IFLF…VFLN), 270 to 290 (PLGG…YGIF), 304 to 324 (YTSI…FSTL), 333 to 353 (IAYS…SNII), 360 to 380 (ILLG…AGGV), 399 to 419 (VMPL…GAPL), 437 to 457 (LPLL…YTIY), and 484 to 504 (FFLL…PSFI).

The protein belongs to the complex I subunit 4 family.

It is found in the mitochondrion membrane. The catalysed reaction is a ubiquinone + NADH + 5 H(+)(in) = a ubiquinol + NAD(+) + 4 H(+)(out). Functionally, core subunit of the mitochondrial membrane respiratory chain NADH dehydrogenase (Complex I) that is believed to belong to the minimal assembly required for catalysis. Complex I functions in the transfer of electrons from NADH to the respiratory chain. The immediate electron acceptor for the enzyme is believed to be ubiquinone. The protein is NADH-ubiquinone oxidoreductase chain 4 (ND4) of Podospora anserina (strain S / ATCC MYA-4624 / DSM 980 / FGSC 10383) (Pleurage anserina).